The chain runs to 89 residues: Small ribosomal subunit protein uS15 (89 aa).

Belongs to the universal ribosomal protein uS15 family. Part of the 30S ribosomal subunit. Forms a bridge to the 50S subunit in the 70S ribosome, contacting the 23S rRNA.

One of the primary rRNA binding proteins, it binds directly to 16S rRNA where it helps nucleate assembly of the platform of the 30S subunit by binding and bridging several RNA helices of the 16S rRNA. Functionally, forms an intersubunit bridge (bridge B4) with the 23S rRNA of the 50S subunit in the ribosome. This is Small ribosomal subunit protein uS15 from Leifsonia xyli subsp. xyli (strain CTCB07).